We begin with the raw amino-acid sequence, 300 residues long: MSYRELVAELPREHAEALSDALVELGALSVSVEDADADTPDEQPLFGEPGLVPERTAWQHSRVIALVDAAQDPAVLLAAAANEAGLAETPRFELREVEEQDWVRLTQSQFDPIHIGEKIWVVPSWHDAPEPDALVLELDPGLAFGTGSHPTTRLCMEWLEQTVQPGQTVLDYGCGSGILAILAKKCGAGNVTGIDIDPQAVEAARQNSERNRADVTYGLPDDCPAGEFDIVVANILSNPLKLMASMLTSKVKPGGRIALSGVLARQADEVASVYARYVDIAVWREHEGWVCLAGTRRESH.

Positions 152, 173, 195, and 234 each coordinate S-adenosyl-L-methionine.

The protein belongs to the methyltransferase superfamily. PrmA family.

Its subcellular location is the cytoplasm. It catalyses the reaction L-lysyl-[protein] + 3 S-adenosyl-L-methionine = N(6),N(6),N(6)-trimethyl-L-lysyl-[protein] + 3 S-adenosyl-L-homocysteine + 3 H(+). Its function is as follows. Methylates ribosomal protein L11. This chain is Ribosomal protein L11 methyltransferase, found in Burkholderia thailandensis (strain ATCC 700388 / DSM 13276 / CCUG 48851 / CIP 106301 / E264).